The primary structure comprises 449 residues: UDP-N-acetylmuramoylalanine--D-glutamate ligase (449 aa).

ATP is bound at residue 118 to 124; it reads GTNGKTT.

This sequence belongs to the MurCDEF family.

It is found in the cytoplasm. The enzyme catalyses UDP-N-acetyl-alpha-D-muramoyl-L-alanine + D-glutamate + ATP = UDP-N-acetyl-alpha-D-muramoyl-L-alanyl-D-glutamate + ADP + phosphate + H(+). It functions in the pathway cell wall biogenesis; peptidoglycan biosynthesis. Functionally, cell wall formation. Catalyzes the addition of glutamate to the nucleotide precursor UDP-N-acetylmuramoyl-L-alanine (UMA). The chain is UDP-N-acetylmuramoylalanine--D-glutamate ligase from Staphylococcus aureus (strain MRSA252).